The following is a 406-amino-acid chain: Glutamyl-tRNA reductase (406 aa).

Substrate contacts are provided by residues 50–53 (TCNR), Ser-107, 112–114 (EPQ), and Gln-118. The active-site Nucleophile is the Cys-51. 187-192 (GAGEMG) is a binding site for NADP(+).

It belongs to the glutamyl-tRNA reductase family. As to quaternary structure, homodimer.

It carries out the reaction (S)-4-amino-5-oxopentanoate + tRNA(Glu) + NADP(+) = L-glutamyl-tRNA(Glu) + NADPH + H(+). It participates in porphyrin-containing compound metabolism; protoporphyrin-IX biosynthesis; 5-aminolevulinate from L-glutamyl-tRNA(Glu): step 1/2. In terms of biological role, catalyzes the NADPH-dependent reduction of glutamyl-tRNA(Glu) to glutamate 1-semialdehyde (GSA). The chain is Glutamyl-tRNA reductase from Aquifex aeolicus (strain VF5).